The sequence spans 309 residues: Protease HtpX homolog (309 aa).

2 consecutive transmembrane segments (helical) span residues 7–27 (AILL…IGGA) and 28–48 (SGAM…YWNS). Residue His130 participates in Zn(2+) binding. The active site involves Glu131. Position 134 (His134) interacts with Zn(2+). 2 helical membrane passes run 145–165 (VTAT…FFGG) and 173–193 (GLGV…AMLV). Glu202 contributes to the Zn(2+) binding site.

The protein belongs to the peptidase M48B family. The cofactor is Zn(2+).

It is found in the cell inner membrane. This Rhodopseudomonas palustris (strain BisA53) protein is Protease HtpX homolog.